Here is a 508-residue protein sequence, read N- to C-terminus: Ribonuclease Y (508 aa).

Residues 198–264 (TVSVINLPND…RLTIEKLITD (67 aa)) form the KH domain. The HD domain maps to 324 to 417 (VLTHSIEVAK…VQAADAVSAS (94 aa)).

It belongs to the RNase Y family.

Functionally, endoribonuclease that initiates mRNA decay. This chain is Ribonuclease Y, found in Fusobacterium nucleatum subsp. nucleatum (strain ATCC 25586 / DSM 15643 / BCRC 10681 / CIP 101130 / JCM 8532 / KCTC 2640 / LMG 13131 / VPI 4355).